The primary structure comprises 213 residues: Inactive ribonuclease-like protein 10 (213 aa).

An N-terminal signal peptide occupies residues 1–24 (MKLTLVQFFFMMLLLLLGLGVGLG). The N-linked (GlcNAc...) asparagine glycan is linked to Asn128.

This sequence belongs to the pancreatic ribonuclease family. The N-terminus is blocked. Glycosylated. In terms of tissue distribution, male-specific expression in proximal caput of the epididymis.

The protein resides in the secreted. In terms of biological role, secreted proximal epididymal protein required for post-testicular sperm maturation and male fertility. May be involved in sperm adhesion to the egg zona pellucida. Does not have ribonuclease activity. This is Inactive ribonuclease-like protein 10 (RNASE10) from Sus scrofa (Pig).